The chain runs to 635 residues: Interferon-induced GTP-binding protein Mx2 (635 aa).

The 274-residue stretch at 31 to 304 (DLALPAIAVI…LVQHIEKSMP (274 aa)) folds into the Dynamin-type G domain. The interval 41-48 (GDQSSGKS) is G1 motif. Residue 41–48 (GDQSSGKS) participates in GTP binding. Residues 66–68 (VTR) form a G2 motif region. Residues 142-145 (DLPG) are G3 motif. Residues 142-146 (DLPGI) and 211-214 (TKPD) contribute to the GTP site. The tract at residues 211–214 (TKPD) is G4 motif. A G5 motif region spans residues 243–246 (KCRG). Residues 549-635 (LREMMLHLKS…MKAHNYLVEF (87 aa)) form the GED domain.

Belongs to the TRAFAC class dynamin-like GTPase superfamily. Dynamin/Fzo/YdjA family.

It localises to the nucleus. Its subcellular location is the cytoplasm. Its function is as follows. Does not inhibit strain RB-1 of the fish pathogen, infectious hematopoietic necrosis virus (IHNV). This chain is Interferon-induced GTP-binding protein Mx2, found in Oncorhynchus mykiss (Rainbow trout).